Consider the following 453-residue polypeptide: tRNA modification GTPase MnmE (453 aa).

Residues arginine 22, glutamate 79, and lysine 119 each coordinate (6S)-5-formyl-5,6,7,8-tetrahydrofolate. Positions 215-376 (GMKVVIAGRP…LKQHLKSLMG (162 aa)) constitute a TrmE-type G domain. Asparagine 225 contacts K(+). GTP is bound by residues 225 to 230 (NAGKSS), 244 to 250 (TEIAGTT), 269 to 272 (DTAG), and 334 to 337 (NKAD). Serine 229 serves as a coordination point for Mg(2+). Residues threonine 244, isoleucine 246, and threonine 249 each contribute to the K(+) site. Threonine 250 contributes to the Mg(2+) binding site. Lysine 453 lines the (6S)-5-formyl-5,6,7,8-tetrahydrofolate pocket.

Belongs to the TRAFAC class TrmE-Era-EngA-EngB-Septin-like GTPase superfamily. TrmE GTPase family. In terms of assembly, homodimer. Heterotetramer of two MnmE and two MnmG subunits. The cofactor is K(+).

Its subcellular location is the cytoplasm. In terms of biological role, exhibits a very high intrinsic GTPase hydrolysis rate. Involved in the addition of a carboxymethylaminomethyl (cmnm) group at the wobble position (U34) of certain tRNAs, forming tRNA-cmnm(5)s(2)U34. The chain is tRNA modification GTPase MnmE from Shewanella sp. (strain MR-7).